Reading from the N-terminus, the 697-residue chain is Long-chain-fatty-acid--CoA ligase 6 (697 aa).

The helical; Signal-anchor for type III membrane protein transmembrane segment at 25–45 threads the bilayer; that stretch reads LSATTLVSVGALAAVLAYWLT. Over 46-697 the chain is Cytoplasmic; it reads HRPKALQPPC…QIEELYLVSV (652 aa).

It belongs to the ATP-dependent AMP-binding enzyme family. It depends on Mg(2+) as a cofactor.

The protein localises to the mitochondrion outer membrane. Its subcellular location is the peroxisome membrane. It localises to the microsome membrane. The protein resides in the endoplasmic reticulum membrane. The enzyme catalyses a long-chain fatty acid + ATP + CoA = a long-chain fatty acyl-CoA + AMP + diphosphate. It carries out the reaction (5Z,8Z,11Z,14Z)-eicosatetraenoate + ATP + CoA = (5Z,8Z,11Z,14Z)-eicosatetraenoyl-CoA + AMP + diphosphate. It catalyses the reaction 15-hydroxy-(5Z,8Z,11Z,13E)-eicosatetraenoate + ATP + CoA = 15-hydroxy-(5Z,8Z,11Z,13E)-eicosatetraenoyl-CoA + AMP + diphosphate. The catalysed reaction is 12-hydroxy-(5Z,8Z,10E,14Z)-eicosatetraenoate + ATP + CoA = 12-hydroxy-(5Z,8Z,10E,14Z)-eicosatetraenoyl-CoA + AMP + diphosphate. The enzyme catalyses 5-hydroxy-(6E,8Z,11Z,14Z)-eicosatetraenoate + ATP + CoA = 5-hydroxy-(6E,8Z,11Z,14Z)-eicosatetraenoyl-CoA + AMP + diphosphate. It carries out the reaction hexadecanoate + ATP + CoA = hexadecanoyl-CoA + AMP + diphosphate. It catalyses the reaction (E)-hexadec-2-enoate + ATP + CoA = (2E)-hexadecenoyl-CoA + AMP + diphosphate. Functionally, catalyzes the conversion of long-chain fatty acids to their active form acyl-CoA for both synthesis of cellular lipids, and degradation via beta-oxidation. Plays an important role in fatty acid metabolism in brain and the acyl-CoAs produced may be utilized exclusively for the synthesis of the brain lipid. This chain is Long-chain-fatty-acid--CoA ligase 6 (Acsl6), found in Mus musculus (Mouse).